We begin with the raw amino-acid sequence, 66 residues long: Large ribosomal subunit protein bL33 (66 aa).

Belongs to the bacterial ribosomal protein bL33 family.

This is Large ribosomal subunit protein bL33 from Synechococcus sp. (strain CC9902).